The sequence spans 39 residues: Omega-theraphotoxin-Asp1a (39 aa).

3 disulfide bridges follow: cysteine 4–cysteine 25, cysteine 8–cysteine 31, and cysteine 17–cysteine 36.

As to expression, expressed by the venom gland.

It localises to the secreted. In terms of biological role, toxin that inhibits voltage-gated calcium channels in rat cerebellar granule cells (IC(50)&lt;200 nM). Is lethal to cockroaches. This is Omega-theraphotoxin-Asp1a from Aphonopelma sp. (American tarantula).